Consider the following 224-residue polypeptide: 7-cyano-7-deazaguanine synthase (224 aa).

Residue 10-20 (FSGGQDSTTCL) participates in ATP binding. C193, C201, C204, and C207 together coordinate Zn(2+).

It belongs to the QueC family. Zn(2+) serves as cofactor.

It carries out the reaction 7-carboxy-7-deazaguanine + NH4(+) + ATP = 7-cyano-7-deazaguanine + ADP + phosphate + H2O + H(+). It functions in the pathway purine metabolism; 7-cyano-7-deazaguanine biosynthesis. Catalyzes the ATP-dependent conversion of 7-carboxy-7-deazaguanine (CDG) to 7-cyano-7-deazaguanine (preQ(0)). This Neisseria gonorrhoeae (strain ATCC 700825 / FA 1090) protein is 7-cyano-7-deazaguanine synthase.